The primary structure comprises 5005 residues: Bridge-like lipid transfer protein family member 1 (5005 aa).

The helical transmembrane segment at 27-47 threads the bilayer; sequence VVWLLVATILSCGWIIYLTYY. 2 disordered regions span residues 692 to 718 and 1205 to 1314; these read RPAQ…PSEL and KSVG…ASVC. Over residues 708–718 the composition is skewed to pro residues; it reads SPRPPVDPSEL. The segment covering 1205–1215 has biased composition (basic and acidic residues); it reads KSVGIEGERKT. Residues 1226-1240 are compositionally biased toward low complexity; that stretch reads SHSSSSSSEENSSSS. Over residues 1248–1275 the composition is skewed to basic and acidic residues; that stretch reads GEKESPSSAADDHSVQKDLLHSARRDDG. Polar residues predominate over residues 1278 to 1303; sequence SVPTEISGTSPVSPNTQDKSVGQSPL. Phosphoserine is present on residues serine 1301, serine 1305, and serine 1323. Threonine 1325 is modified (phosphothreonine). Disordered regions lie at residues 1343–1376, 1399–1425, 1521–1544, and 1676–1698; these read SDVS…SNSF, EEFE…QMQQ, TNKR…SEES, and FSEN…MIGT. Serine 1355 and serine 1406 each carry phosphoserine. Positions 1521-1530 are enriched in basic residues; it reads TNKRTSKSSL. Positions 1684 to 1693 are enriched in basic and acidic residues; it reads QDIRGTKTEH. A phosphoserine mark is found at serine 1805 and serine 1808. 6 disordered regions span residues 1927-1991, 2165-2192, 2265-2288, 2367-2387, 2400-2420, and 2598-2677; these read RGGV…PLMP, PAQP…GGLQ, TSGD…KESP, ESPV…PNLP, SSDQ…QDDV, and TAGS…KDVV. Polar residues-rich tracts occupy residues 1931-1948 and 1959-1971; these read LTSN…YNTD and TSPS…NSVS. Composition is skewed to polar residues over residues 2367-2379, 2400-2418, and 2598-2608; these read ESPV…NSLP, SSDQ…TSQD, and TAGSASPTPTF. 2 positions are modified to phosphoserine: serine 2601 and serine 2603. The segment covering 2619-2638 has biased composition (low complexity); sequence SDFSRSSRGSLNGGNRVNNA. Residues 2643 to 2665 show a composition bias toward basic and acidic residues; it reads ANNENNKKESRNKNSLGRSERRT. Residue serine 2755 is modified to Phosphoserine. Residues 2928–2967 form a disordered region; the sequence is RQPSTAPQPMKEDIATPLPSEKTPTSVNQTPIETNEFPQL. Over residues 2949 to 2964 the composition is skewed to polar residues; the sequence is KTPTSVNQTPIETNEF. Serine 3562, glutamate 3577, and serine 3653 each carry phosphoserine. Disordered regions lie at residues 3614–3662, 3686–3744, 3821–3843, 3935–3954, 4089–4145, and 4325–4396; these read YSRS…TFNI, SSNS…ERFY, RRSY…KKFQ, KTNT…KGKG, TTYP…SSSS, and QSAS…ASQQ. Polar residues predominate over residues 3686-3711; sequence SSNSEGSCSVFSSPKTTGGFSPSVPF. Residues 3727-3736 show a composition bias toward acidic residues; the sequence is EDSEKDEKDE. Residues 3821–3837 are compositionally biased toward basic and acidic residues; sequence RRSYDRSSRSLDQDSPS. Polar residues predominate over residues 4097-4112; that stretch reads SPGSNAPQTGAKTSAS. The segment covering 4117-4145 has biased composition (low complexity); the sequence is PGSSGLGSPLGRSRHSSSQSDLTGSSSSS. The residue at position 4124 (serine 4124) is a Phosphoserine. Over residues 4325 to 4358 the composition is skewed to polar residues; that stretch reads QSASFTHMPQSPNVFNEHMTNNTMSPGTAAQSLK. Residues 4359–4372 show a composition bias toward low complexity; that stretch reads SPASIRSRSVSDSS. The segment covering 4381 to 4396 has biased composition (polar residues); the sequence is KTSTPVNKSNKAASQQ.

As to expression, highly expressed in testis and ovary. Weakly or not expressed in other tissues.

It is found in the cell membrane. It localises to the endoplasmic reticulum membrane. The protein resides in the mitochondrion membrane. Functionally, tube-forming lipid transport protein which provides phosphatidylethanolamine for glycosylphosphatidylinositol (GPI) anchor synthesis in the endoplasmic reticulum. Plays a role in endosomal trafficking and endosome recycling. Also involved in the actin cytoskeleton and cilia structural dynamics. Acts as a regulator of phagocytosis. The chain is Bridge-like lipid transfer protein family member 1 (Bltp1) from Mus musculus (Mouse).